Here is a 463-residue protein sequence, read N- to C-terminus: L-seryl-tRNA(Sec) selenium transferase (463 aa).

At Lys-295 the chain carries N6-(pyridoxal phosphate)lysine.

It belongs to the SelA family. In terms of assembly, homodecamer; pentamer of dimers. Binds only one seryl-tRNA(Sec) per dimer. Pyridoxal 5'-phosphate is required as a cofactor.

The protein localises to the cytoplasm. The enzyme catalyses L-seryl-tRNA(Sec) + selenophosphate + H(+) = L-selenocysteinyl-tRNA(Sec) + phosphate. Its pathway is aminoacyl-tRNA biosynthesis; selenocysteinyl-tRNA(Sec) biosynthesis; selenocysteinyl-tRNA(Sec) from L-seryl-tRNA(Sec) (bacterial route): step 1/1. In terms of biological role, converts seryl-tRNA(Sec) to selenocysteinyl-tRNA(Sec) required for selenoprotein biosynthesis. The chain is L-seryl-tRNA(Sec) selenium transferase from Serratia proteamaculans (strain 568).